Consider the following 386-residue polypeptide: Manganese dependent endoglucanase Eg5A (386 aa).

Residues 1–17 form the signal peptide; that stretch reads MLKYASIALALATLGVA. The region spanning 18–53 is the CBM1 domain; it reads QQQQWGQCGGIGWTGATTCVAGSVCSVLNPYYSQCI. Glu209 acts as the Proton donor in catalysis. Catalysis depends on Glu319, which acts as the Nucleophile. N-linked (GlcNAc...) asparagine glycosylation occurs at Asn324.

The protein belongs to the glycosyl hydrolase 5 (cellulase A) family. Mn(2+) is required as a cofactor.

It localises to the secreted. It catalyses the reaction Endohydrolysis of (1-&gt;4)-beta-D-glucosidic linkages in cellulose, lichenin and cereal beta-D-glucans.. Secreted manganese dependent endoglucanase that acts by cleaving the beta-1,4-glucose linkage. Exhibits high activity toward carboxymethyl-cellulose (CMC), barley glucan, and glucomannan. Displays low activity on larminarin and xyloglucan but does not hydrolyze hemicellulose substrates such as birchwood xylan, arabinoxylan, and arabinan. The polypeptide is Manganese dependent endoglucanase Eg5A (Phanerodontia chrysosporium (White-rot fungus)).